Here is an 80-residue protein sequence, read N- to C-terminus: Exodeoxyribonuclease 7 small subunit (80 aa).

It belongs to the XseB family. Heterooligomer composed of large and small subunits.

The protein resides in the cytoplasm. It carries out the reaction Exonucleolytic cleavage in either 5'- to 3'- or 3'- to 5'-direction to yield nucleoside 5'-phosphates.. In terms of biological role, bidirectionally degrades single-stranded DNA into large acid-insoluble oligonucleotides, which are then degraded further into small acid-soluble oligonucleotides. This chain is Exodeoxyribonuclease 7 small subunit, found in Halalkalibacterium halodurans (strain ATCC BAA-125 / DSM 18197 / FERM 7344 / JCM 9153 / C-125) (Bacillus halodurans).